Here is a 496-residue protein sequence, read N- to C-terminus: uncharacterized protein (496 aa).

12 helical membrane passes run 33–53 (FLKG…LIFA), 89–109 (LNFL…YTLI), 127–147 (PWFV…FTFF), 154–174 (VFNL…YEIF), 193–213 (LIIA…TPLV), 247–267 (IILI…NTNF), 285–305 (LWFI…VFAY), 320–340 (LWVY…YMVF), 355–375 (LLNL…VTLF), 382–402 (SLIN…IYIF), 411–431 (LLVL…IVGF), and 455–475 (VQIM…YLTI).

It is found in the cell membrane. This is an uncharacterized protein from Ureaplasma parvum serovar 3 (strain ATCC 700970).